We begin with the raw amino-acid sequence, 696 residues long: Elongation factor G (696 aa).

The tr-type G domain occupies 8–290 (ERYRNIGIMA…AVLDYLPSPL (283 aa)). GTP contacts are provided by residues 17–24 (AHIDAGKT), 88–92 (DTPGH), and 142–145 (NKMD).

Belongs to the TRAFAC class translation factor GTPase superfamily. Classic translation factor GTPase family. EF-G/EF-2 subfamily.

It localises to the cytoplasm. Catalyzes the GTP-dependent ribosomal translocation step during translation elongation. During this step, the ribosome changes from the pre-translocational (PRE) to the post-translocational (POST) state as the newly formed A-site-bound peptidyl-tRNA and P-site-bound deacylated tRNA move to the P and E sites, respectively. Catalyzes the coordinated movement of the two tRNA molecules, the mRNA and conformational changes in the ribosome. This Nitrosomonas europaea (strain ATCC 19718 / CIP 103999 / KCTC 2705 / NBRC 14298) protein is Elongation factor G.